Here is a 227-residue protein sequence, read N- to C-terminus: PKHD-type hydroxylase Swit_4046 (227 aa).

Residues 78–178 enclose the Fe2OG dioxygenase domain; that stretch reads KVFPPLFNLY…RLCSFFWIQS (101 aa). Fe cation is bound by residues His96, Asp98, and His159. Residue Arg169 coordinates 2-oxoglutarate.

Requires Fe(2+) as cofactor. The cofactor is L-ascorbate.

This Rhizorhabdus wittichii (strain DSM 6014 / CCUG 31198 / JCM 15750 / NBRC 105917 / EY 4224 / RW1) (Sphingomonas wittichii) protein is PKHD-type hydroxylase Swit_4046.